The chain runs to 210 residues: High-affinity nitrate transporter 3.1 (210 aa).

Positions Met1 to Gly22 are cleaved as a signal peptide. A helical membrane pass occupies residues Leu178–Val198.

It belongs to the NAR2 family. As to quaternary structure, heterotetramer composed of two NRT2.1 and two NRT3.1. Interacts with NRT2.1 and NRT2.3. Interacts with all other NRT2 transporters, including NRT2.5. Highly expressed in roots. Detected in shoots.

It is found in the cell membrane. Acts as a dual component transporter with NTR2.1. Required for high-affinity nitrate transport. Acts as a repressor of lateral root initiation. May be involved in targeting NRT2 proteins to the plasma membrane. The protein is High-affinity nitrate transporter 3.1 (NRT3.1) of Arabidopsis thaliana (Mouse-ear cress).